The sequence spans 167 residues: Bacterioferritin (167 aa).

The Ferritin-like diiron domain occupies 1–145; the sequence is MQGDPEVIEF…TQLDLIEKLG (145 aa). The Fe cation site is built by E18 and E51. Residue M52 participates in heme b binding. The Fe cation site is built by H54, E94, E127, and H130.

It belongs to the bacterioferritin family. In terms of assembly, homooligomer of 24 subunits, arranged as 12 dimers, that are packed together to form an approximately spherical molecule with a central cavity, in which large amounts of iron can be deposited. The cofactor is heme b.

The catalysed reaction is 4 Fe(2+) + O2 + 4 H(+) = 4 Fe(3+) + 2 H2O. It carries out the reaction Fe(2+)(in) = Fe(2+)(out). Its function is as follows. Iron-storage protein, whose ferroxidase center binds Fe(2+), oxidizes it using dioxygen to Fe(3+), and participates in the subsequent Fe(3+) oxide mineral core formation within the central cavity of the BFR protein shell. This is Bacterioferritin (bfr) from Streptomyces coelicolor (strain ATCC BAA-471 / A3(2) / M145).